We begin with the raw amino-acid sequence, 218 residues long: Very-long-chain (3R)-3-hydroxyacyl-CoA dehydratase hpo-8 (218 aa).

The next 5 helical transmembrane spans lie at 15–35, 44–64, 86–106, 137–157, and 176–196; these read ILGW…GLTW, FELK…IVGL, ILHL…LVAW, LFYV…FASL, and MGIS…PGFP. Residues Tyr-142 and Glu-149 contribute to the active site.

It belongs to the very long-chain fatty acids dehydratase HACD family.

It localises to the membrane. The catalysed reaction is a very-long-chain (3R)-3-hydroxyacyl-CoA = a very-long-chain (2E)-enoyl-CoA + H2O. Its pathway is lipid metabolism; fatty acid biosynthesis. In terms of biological role, catalyzes the third of the four reactions of the long-chain fatty acids elongation cycle. This endoplasmic reticulum-bound enzymatic process, allows the addition of two carbons to the chain of long- and very long-chain fatty acids/VLCFAs per cycle. This enzyme catalyzes the dehydration of the 3-hydroxyacyl-CoA intermediate into trans-2,3-enoyl-CoA, within each cycle of fatty acid elongation. Thereby, it participates in the production of VLCFAs of different chain lengths that are involved in multiple biological processes as precursors of membrane lipids and lipid mediators. In Caenorhabditis elegans, this protein is Very-long-chain (3R)-3-hydroxyacyl-CoA dehydratase hpo-8 (hpo-8).